Reading from the N-terminus, the 299-residue chain is Putative S-adenosyl-L-methionine-dependent methyltransferase MAB_0027c (299 aa).

Residues D126 and 155–156 (DL) each bind S-adenosyl-L-methionine.

Belongs to the UPF0677 family.

Exhibits S-adenosyl-L-methionine-dependent methyltransferase activity. This is Putative S-adenosyl-L-methionine-dependent methyltransferase MAB_0027c from Mycobacteroides abscessus (strain ATCC 19977 / DSM 44196 / CCUG 20993 / CIP 104536 / JCM 13569 / NCTC 13031 / TMC 1543 / L948) (Mycobacterium abscessus).